The following is a 215-amino-acid chain: 3-isopropylmalate dehydratase small subunit (215 aa).

Belongs to the LeuD family. LeuD type 1 subfamily. Heterodimer of LeuC and LeuD.

It carries out the reaction (2R,3S)-3-isopropylmalate = (2S)-2-isopropylmalate. It participates in amino-acid biosynthesis; L-leucine biosynthesis; L-leucine from 3-methyl-2-oxobutanoate: step 2/4. Its function is as follows. Catalyzes the isomerization between 2-isopropylmalate and 3-isopropylmalate, via the formation of 2-isopropylmaleate. In Cellvibrio japonicus (strain Ueda107) (Pseudomonas fluorescens subsp. cellulosa), this protein is 3-isopropylmalate dehydratase small subunit.